We begin with the raw amino-acid sequence, 359 residues long: E3 ubiquitin-protein ligase RNF146 (359 aa).

The RING-type zinc-finger motif lies at 37 to 75 (CAICLQTCVHPVSLPCKHVFCYLCVKGASWLGKRCALCR). Glycyl lysine isopeptide (Lys-Gly) (interchain with G-Cter in ubiquitin) cross-links involve residues Lys85 and Lys95. A WWE domain is found at 92–168 (EELKAASRGN…EHGRRRKIKR (77 aa)). Positions 108, 111, and 115 each coordinate a glycoprotein. A Glycyl lysine isopeptide (Lys-Gly) (interchain with G-Cter in ubiquitin) cross-link involves residue Lys131. Positions 145, 154, 164, and 176 each coordinate a glycoprotein. Lys176 participates in a covalent cross-link: Glycyl lysine isopeptide (Lys-Gly) (interchain with G-Cter in ubiquitin). The segment at 254-359 (GDNTAERSHR…PDGQCTVTEV (106 aa)) is disordered. A compositionally biased stretch (acidic residues) spans 284–298 (SIEETESDASSDSED). 2 positions are modified to phosphoserine: Ser290 and Ser294. The segment covering 306–323 (HSLTQQRLLVSNANQTVP) has biased composition (polar residues).

As to quaternary structure, can form homooligomers. Interacts with PARsylated AXIN1, AXIN2, BLZF1, CASC3, H1-2, IPO7, LIG3, NCL, PARP1, XRCC1, XRCC5 and XRCC6. Interacts with DDB1, DHX15, IQGAP1, LRPPRC, PARP2, PRKDC, RUVBL2, TNKS1 and TNKS2. Binding often leads to interactor ubiquitination, in the presence of the appropriate E1 and E2 enzymes, and proteasomal degradation. Post-translationally, ubiquitinated; autoubiquitinated. Polyubiquitinated in the presence of UBE2D1, UBE2D2 and UBE2D3. Multimonoubiquitinated in the presence of UBE2E1. Not ubiquitinated in the presence of UBE2H, CDC34, UBE2L3, UBE2L6, nor UBE2C. In the absence of PAR, autoubiquitination occurs on Lys-85, Lys-95 and Lys-176 via 'Lys-11' and 'Lys-48' ubiquitin linkages. In the presence of PAR, Lys-131 and Lys-176 are ubiquitinated via 'Lys-6', 'Lys-33' and 'Lys-48' ubiquitin linkages. Autoubiquitination is enhanced upon PAR-binding. Ubiquitously expressed. Up-regulated in brains from patients with Alzheimer disease.

Its subcellular location is the cytoplasm. It localises to the cytosol. The protein localises to the nucleus. It carries out the reaction S-ubiquitinyl-[E2 ubiquitin-conjugating enzyme]-L-cysteine + [acceptor protein]-L-lysine = [E2 ubiquitin-conjugating enzyme]-L-cysteine + N(6)-ubiquitinyl-[acceptor protein]-L-lysine.. It participates in protein modification; protein ubiquitination. Its function is as follows. E3 ubiquitin-protein ligase that specifically binds poly-ADP-ribosylated (PARsylated) proteins and mediates their ubiquitination and subsequent degradation. May regulate many important biological processes, such as cell survival and DNA damage response. Acts as an activator of the Wnt signaling pathway by mediating the ubiquitination of PARsylated AXIN1 and AXIN2, 2 key components of the beta-catenin destruction complex. Acts in cooperation with tankyrase proteins (TNKS and TNKS2), which mediate PARsylation of target proteins AXIN1, AXIN2, BLZF1, CASC3, TNKS and TNKS2. Recognizes and binds tankyrase-dependent PARsylated proteins via its WWE domain and mediates their ubiquitination, leading to their degradation. Different ubiquitin linkage types have been observed: TNKS2 undergoes ubiquitination at 'Lys-48' and 'Lys-63', while AXIN1 is only ubiquitinated at 'Lys-48'. May regulate TNKS and TNKS2 subcellular location, preventing aggregation at a centrosomal location. Neuroprotective protein. Protects the brain against N-methyl-D-aspartate (NMDA) receptor-mediated glutamate excitotoxicity and ischemia, by interfering with PAR-induced cell death, called parthanatos. Prevents nuclear translocation of AIFM1 in a PAR-binding dependent manner. Does not affect PARP1 activation. Protects against cell death induced by DNA damaging agents, such as N-methyl-N-nitro-N-nitrosoguanidine (MNNG) and rescues cells from G1 arrest. Promotes cell survival after gamma-irradiation. Facilitates DNA repair. This Homo sapiens (Human) protein is E3 ubiquitin-protein ligase RNF146 (RNF146).